Here is a 148-residue protein sequence, read N- to C-terminus: MALSRSVGRGSKLTSPKNDTYLLASFRWNLDRDLLFRCERYFCMWASTGYSSSCSCFPATRSASVDSTPSVDSTGSTSDVVDDRGETSMDSCGRITLSYVTECRLLASAELSLRILRNSSSCNKSLVSVILAICFGALAASRAEQPPA.

Residues 65-79 are compositionally biased toward low complexity; that stretch reads VDSTPSVDSTGSTSD. The interval 65-85 is disordered; it reads VDSTPSVDSTGSTSDVVDDRG.

This is an uncharacterized protein from Saccharomyces cerevisiae (strain ATCC 204508 / S288c) (Baker's yeast).